Consider the following 116-residue polypeptide: Alpha-amylase inhibitor 5 (116 aa).

Cystine bridges form between Cys4–Cys55, Cys18–Cys44, Cys27–Cys77, Cys45–Cys95, and Cys57–Cys106.

Belongs to the protease inhibitor I6 (cereal trypsin/alpha-amylase inhibitor) family.

Its subcellular location is the secreted. In terms of biological role, alpha-amylase inhibitor. The polypeptide is Alpha-amylase inhibitor 5 (Sorghum bicolor (Sorghum)).